Here is a 950-residue protein sequence, read N- to C-terminus: UvrABC system protein A (950 aa).

42 to 49 is a binding site for ATP; sequence GLSGSGKS. A C4-type zinc finger spans residues 262–289; sequence CPVCSYSLPELEPRLFSFNNPMGSCPTC. 2 ABC transporter domains span residues 319–596 and 616–945; these read WDKR…EKSV and VNPG…KYLK. Position 649–656 (649–656) interacts with ATP; the sequence is GVSGSGKS. The C4-type zinc-finger motif lies at 748–774; it reads CEACQGDGVIKVEMHFLPDVYVPCEVC.

Belongs to the ABC transporter superfamily. UvrA family. In terms of assembly, forms a heterotetramer with UvrB during the search for lesions.

The protein localises to the cytoplasm. In terms of biological role, the UvrABC repair system catalyzes the recognition and processing of DNA lesions. UvrA is an ATPase and a DNA-binding protein. A damage recognition complex composed of 2 UvrA and 2 UvrB subunits scans DNA for abnormalities. When the presence of a lesion has been verified by UvrB, the UvrA molecules dissociate. The polypeptide is UvrABC system protein A (Neisseria gonorrhoeae).